The sequence spans 154 residues: Transcription antitermination protein NusB (154 aa).

The interval 132–154 (KDKQSPQSTPLDDSDKDESDQTN) is disordered. Residues 143-154 (DDSDKDESDQTN) show a composition bias toward acidic residues.

It belongs to the NusB family.

Functionally, involved in transcription antitermination. Required for transcription of ribosomal RNA (rRNA) genes. Binds specifically to the boxA antiterminator sequence of the ribosomal RNA (rrn) operons. The polypeptide is Transcription antitermination protein NusB (Bifidobacterium animalis subsp. lactis (strain AD011)).